The chain runs to 1778 residues: Internalin I (1778 aa).

Residues 1–28 (MKKKFSIVIISVLLLGYLAPFDTLLVGA) form the signal peptide. The tract at residues 36–101 (DTAVKTAEAD…NIKTEINTDK (66 aa)) is disordered. Residues 51-62 (IESETGSDDETA) are compositionally biased toward acidic residues. Basic and acidic residues predominate over residues 63–88 (EEPKEAKEAEASKETTEKEEKAKTEE). 27 LRR repeats span residues 155-179 (AISQ…EGLQ), 183-204 (NLTS…KDLV), 205-227 (NLVS…EDLV), 228-250 (NLQE…ASLP), 251-272 (VLKE…NPAG), 277-298 (ELET…AKLP), 299-321 (KLKN…NGAT), 322-344 (KLQL…SGLS), 345-367 (ELEM…KNLP), 368-389 (NLVN…NNLP), 390-412 (KLQT…TDLP), 413-434 (QLKT…DNLP), 435-456 (KLEK…TDLP), 457-478 (RLSY…KKLP), 479-500 (LLEW…TNFP), 501-522 (SLNY…TELP), 523-544 (SLKE…HDMP), 545-566 (NLRK…DNLP), 567-588 (KLQS…HDLP), 589-610 (SLET…DNLP), 611-632 (DLTY…GDLP), 633-653 (NLET…GTMD), 657-678 (KLRI…GNLS), 685-707 (NLTE…STLS), 708-729 (RLIY…SNLT), 730-751 (NLQE…SDLE), and 752-773 (NLNK…ANMV). Residues 785–872 (TYTLPTVLSY…SAAKVTADAE (88 aa)) enclose the LRRCT domain. MucBP domains lie at 1510–1569 (DAAA…EQTV), 1575–1634 (AIKP…PQTI), and 1644–1705 (SKKS…SQTV). Residues 1716-1742 (SKDDPKVKGKTNQPSSTDTKLKVDNNS) are disordered. Residues 1725 to 1742 (KTNQPSSTDTKLKVDNNS) show a composition bias toward polar residues. An LPXTG sorting signal motif is present at residues 1743-1747 (LPATG). Pentaglycyl murein peptidoglycan amidated threonine is present on threonine 1746. Positions 1747-1778 (GDTENMILAVLIGFNMLIVASIFLFRKPKTNQ) are cleaved as a propeptide — removed by sortase.

This sequence belongs to the internalin family.

Its subcellular location is the secreted. It is found in the cell wall. Its function is as follows. A role in virulence could not be demonstrated. This is Internalin I (inlI) from Listeria monocytogenes serovar 1/2a (strain ATCC BAA-679 / EGD-e).